The following is a 455-amino-acid chain: Retinoic acid receptor beta (455 aa).

Positions 1-87 (MTTSGHACPV…PLPPPRVYKP (87 aa)) are modulating. Positions 47 to 78 (HPPPSGCSTPSPATIETQSTSSEELVPSPPSP) are disordered. Over residues 53–66 (CSTPSPATIETQST) the composition is skewed to polar residues. Phosphoserine is present on Ser77. NR C4-type zinc fingers lie at residues 88 to 108 (CFVCQDKSSGYHYGVSACEGC) and 124 to 148 (CHRDKNCVINKVTRNRCQYCRLQKC). A DNA-binding region (nuclear receptor) is located at residues 88–153 (CFVCQDKSSG…RLQKCFEVGM (66 aa)). Positions 154–182 (SKESVRNDRNKKKKETSKQECTESYEMTA) are hinge. An NR LBD domain is found at 183 to 417 (ELDDLTEKIR…PLIQEMLENS (235 aa)). A disordered region spans residues 415–455 (ENSEGHEPLTPSSSGNTAEHSPSISPSSVENSGVSQSPLVQ). The segment covering 424–434 (TPSSSGNTAEH) has biased composition (polar residues). Positions 435–455 (SPSISPSSVENSGVSQSPLVQ) are enriched in low complexity.

It belongs to the nuclear hormone receptor family. NR1 subfamily. In terms of assembly, homodimer. Heterodimer; with a RXR molecule. Binds DNA preferentially as a RAR/RXR heterodimer. Heterodimerizes (via NR LBD) with RXRA. Interacts weakly with NCOR2. Expressed in aortic endothelial cells (at protein level).

It localises to the nucleus. The protein resides in the cytoplasm. Receptor for retinoic acid. Retinoic acid receptors bind as heterodimers to their target response elements in response to their ligands, all-trans or 9-cis retinoic acid, and regulate gene expression in various biological processes. The RXR/RAR heterodimers bind to the retinoic acid response elements (RARE) composed of tandem 5'-AGGTCA-3' sites known as DR1-DR5. In the absence or presence of hormone ligand, acts mainly as an activator of gene expression due to weak binding to corepressors. The RXRA/RARB heterodimer can act as a repressor on the DR1 element and as an activator on the DR5 element. In concert with RARG, required for skeletal growth, matrix homeostasis and growth plate function. This chain is Retinoic acid receptor beta (RARB), found in Homo sapiens (Human).